We begin with the raw amino-acid sequence, 464 residues long: D-2-hydroxyglutarate dehydrogenase (464 aa).

The region spanning 37-216 (FAPAPSAIVF…VEATMRLERQ (180 aa)) is the FAD-binding PCMH-type domain. (R)-2-hydroxyglutarate is bound by residues Arg-325, Ser-329, and Lys-339. Residues Arg-325, Ser-329, and Lys-339 each coordinate (R)-malate. Residues His-374 and His-381 each contribute to the Zn(2+) site. Asn-383 lines the (R)-2-hydroxyglutarate pocket. A Zn(2+)-binding site is contributed by Glu-420. Residue His-421 participates in (R)-2-hydroxyglutarate binding. His-421 is a binding site for (R)-malate.

Belongs to the FAD-binding oxidoreductase/transferase type 4 family. As to quaternary structure, homodimer. It depends on FAD as a cofactor.

It catalyses the reaction (R)-2-hydroxyglutarate + A = 2-oxoglutarate + AH2. The catalysed reaction is (R)-malate + A = oxaloacetate + AH2. With respect to regulation, activated by Zn(2+) ions at low concentrations (10 uM) and inhibited by Zn(2+), Fe(2+) and Ni(2+) at high concentrations (10 mM). Functionally, catalyzes the dehydrogenation of (R)-2-hydroxyglutarate (D-2-hydroxyglutarate or D-2-HG) to 2-oxoglutarate and of (R)-malate (D-malate) to oxaloacetate. Is functionally tied to L-serine biosynthesis, via its coupling with the D-3-phosphoglycerate dehydrogenase SerA, encoded by the adjacent gene in the locus. Is required for the utilization of D-2-hydroxyglutarate as well as D-malate as the sole carbon source for growth of P.stutzeri. Active in vitro with artificial electron acceptors such as 2,6-dichlorophenolindophenol (DCPIP) and appears to couple with electron transfer flavoprotein (ETF) for efficient oxidation of both D-2-hydroxyglutarate and D-malate in vivo. Cannot catalyze the oxidation of L-2-hydroxyglutarate, D-lactate, D-tartrate, D-2-hydroxybutanoate, D-mandelate, D-glycerate and D-phenyllactate. The polypeptide is D-2-hydroxyglutarate dehydrogenase (Stutzerimonas stutzeri (strain A1501) (Pseudomonas stutzeri)).